The chain runs to 139 residues: Putative pre-16S rRNA nuclease (139 aa).

The protein belongs to the YqgF nuclease family.

It is found in the cytoplasm. Functionally, could be a nuclease involved in processing of the 5'-end of pre-16S rRNA. The polypeptide is Putative pre-16S rRNA nuclease (Streptococcus mutans serotype c (strain ATCC 700610 / UA159)).